The primary structure comprises 102 residues: NADH-quinone oxidoreductase subunit K (102 aa).

3 consecutive transmembrane segments (helical) span residues 6 to 26 (MHHG…GILV), 30 to 50 (LIFI…AFVV), and 64 to 84 (FIFI…LLLL).

The protein belongs to the complex I subunit 4L family. NDH-1 is composed of 14 different subunits. Subunits NuoA, H, J, K, L, M, N constitute the membrane sector of the complex.

It localises to the cell inner membrane. It carries out the reaction a quinone + NADH + 5 H(+)(in) = a quinol + NAD(+) + 4 H(+)(out). In terms of biological role, NDH-1 shuttles electrons from NADH, via FMN and iron-sulfur (Fe-S) centers, to quinones in the respiratory chain. The immediate electron acceptor for the enzyme in this species is believed to be ubiquinone. Couples the redox reaction to proton translocation (for every two electrons transferred, four hydrogen ions are translocated across the cytoplasmic membrane), and thus conserves the redox energy in a proton gradient. The polypeptide is NADH-quinone oxidoreductase subunit K (Nitrosospira multiformis (strain ATCC 25196 / NCIMB 11849 / C 71)).